The chain runs to 208 residues: Small ribosomal subunit protein uS4 (208 aa).

Positions 98-163 (TRLDNVVFRL…TPLFKEIVDG (66 aa)) constitute an S4 RNA-binding domain.

The protein belongs to the universal ribosomal protein uS4 family. As to quaternary structure, part of the 30S ribosomal subunit. Contacts protein S5. The interaction surface between S4 and S5 is involved in control of translational fidelity.

In terms of biological role, one of the primary rRNA binding proteins, it binds directly to 16S rRNA where it nucleates assembly of the body of the 30S subunit. With S5 and S12 plays an important role in translational accuracy. The protein is Small ribosomal subunit protein uS4 of Heliobacterium modesticaldum (strain ATCC 51547 / Ice1).